A 256-amino-acid polypeptide reads, in one-letter code: Phosphatidylglycerol--prolipoprotein diacylglyceryl transferase (256 aa).

A run of 3 helical transmembrane segments spans residues 19–39 (VHWY…LGYW), 56–76 (LIFY…MLFY), and 91–111 (IWEG…AAWL). An a 1,2-diacyl-sn-glycero-3-phospho-(1'-sn-glycerol)-binding site is contributed by Arg-139. Residues 231-251 (FGWLTMGQVLSIPMLLIGIWL) form a helical membrane-spanning segment.

This sequence belongs to the Lgt family.

Its subcellular location is the cell inner membrane. It catalyses the reaction L-cysteinyl-[prolipoprotein] + a 1,2-diacyl-sn-glycero-3-phospho-(1'-sn-glycerol) = an S-1,2-diacyl-sn-glyceryl-L-cysteinyl-[prolipoprotein] + sn-glycerol 1-phosphate + H(+). Its pathway is protein modification; lipoprotein biosynthesis (diacylglyceryl transfer). In terms of biological role, catalyzes the transfer of the diacylglyceryl group from phosphatidylglycerol to the sulfhydryl group of the N-terminal cysteine of a prolipoprotein, the first step in the formation of mature lipoproteins. The sequence is that of Phosphatidylglycerol--prolipoprotein diacylglyceryl transferase from Legionella pneumophila subsp. pneumophila (strain Philadelphia 1 / ATCC 33152 / DSM 7513).